We begin with the raw amino-acid sequence, 120 residues long: Protein TCL1B4 (120 aa).

Belongs to the TCL1 family.

In Mus musculus (Mouse), this protein is Protein TCL1B4 (Tcl1b4).